The primary structure comprises 1066 residues: Phosphatidylinositol 4-kinase PIK1 (1066 aa).

Residues 1 to 133 form the PIK helical domain; the sequence is MHKASSSKKS…GFQVARRVLN (133 aa). Phosphoserine occurs at positions 10 and 236. Disordered regions lie at residues 218-240, 303-411, and 564-624; these read KKTS…PIDL, DGKN…KKAN, and NENR…LGDM. Residues 342 to 356 show a composition bias toward acidic residues; sequence NNEDETGGETEEDAD. Polar residues-rich tracts occupy residues 374–411 and 570–597; these read QPRT…KKAN and STLT…NEGL. Phosphoserine is present on serine 384. Residue threonine 394 is modified to Phosphothreonine. 2 positions are modified to phosphoserine: serine 396 and serine 592. Residues 598–609 show a composition bias toward low complexity; that stretch reads SSTSRSDSASTA. The region spanning 770–1049 is the PI3K/PI4K catalytic domain; the sequence is ATKKERIRKT…FLIGKSLGSI (280 aa). The interval 776 to 782 is G-loop; the sequence is IRKTSEY. The tract at residues 915-923 is catalytic loop; sequence QVKDRHNGN. The segment at 934–958 is activation loop; sequence HIDFGFMLSNSPGSVGFEAAPFKLT.

Belongs to the PI3/PI4-kinase family. Type III PI4K subfamily. As to quaternary structure, interacts with FRQ1.

The protein resides in the nucleus. It localises to the golgi apparatus. Its subcellular location is the trans-Golgi network. The enzyme catalyses a 1,2-diacyl-sn-glycero-3-phospho-(1D-myo-inositol) + ATP = a 1,2-diacyl-sn-glycero-3-phospho-(1D-myo-inositol 4-phosphate) + ADP + H(+). In terms of biological role, acts on phosphatidylinositol (PI) in the first committed step in the production of the second messenger inositol 1,4,5,-trisphosphate. PIK1 is part of a nuclear phosphoinositide cycle and could control cytokinesis through the actin cytoskeleton. Involved in the response to mating pheromone. The chain is Phosphatidylinositol 4-kinase PIK1 from Saccharomyces cerevisiae (strain ATCC 204508 / S288c) (Baker's yeast).